The following is a 328-amino-acid chain: tRNA dimethylallyltransferase (328 aa).

25–32 provides a ligand contact to ATP; it reads GPTAVGKT. 27–32 lines the substrate pocket; it reads TAVGKT. The interval 50–53 is interaction with substrate tRNA; the sequence is DSMQ.

The protein belongs to the IPP transferase family. As to quaternary structure, monomer. Mg(2+) serves as cofactor.

It carries out the reaction adenosine(37) in tRNA + dimethylallyl diphosphate = N(6)-dimethylallyladenosine(37) in tRNA + diphosphate. Its function is as follows. Catalyzes the transfer of a dimethylallyl group onto the adenine at position 37 in tRNAs that read codons beginning with uridine, leading to the formation of N6-(dimethylallyl)adenosine (i(6)A). This Halothermothrix orenii (strain H 168 / OCM 544 / DSM 9562) protein is tRNA dimethylallyltransferase.